A 1293-amino-acid chain; its full sequence is Enterobactin synthase component F (1293 aa).

Positions 1-301 (MSQHLPLVAA…NVLPLGIHIA (301 aa)) are elongation/condensation. The interval 482 to 887 (SYREMREQVV…ALPDVEQAVT (406 aa)) is adenylation. In terms of domain architecture, Carrier spans 971–1046 (APKAGSETII…KLATIIDGEE (76 aa)). S1006 is modified (O-(pantetheine 4'-phosphoryl)serine). The thioesterase stretch occupies residues 1066-1293 (PTLFCFHPAS…GPIIRATLNR (228 aa)). The active-site Proton acceptor; for thioesterase activity is the H1271.

It belongs to the ATP-dependent AMP-binding enzyme family. EntF subfamily. Proteins EntB, EntD, EntE and EntF are the component of the enterobactin synthase. Components probably do not form a stable complex. EntF acts as a catalytic monomer. Requires pantetheine 4'-phosphate as cofactor. In terms of processing, 4'-phosphopantetheine is transferred from CoA to a specific serine of apo-EntF by EntD. Holo-EntF so formed is then acylated with seryl-AMP.

The protein resides in the cytoplasm. It carries out the reaction 3 2,3-dihydroxybenzoate + 3 L-serine + 6 ATP = enterobactin + 6 AMP + 6 diphosphate + 4 H(+). It catalyses the reaction holo-[peptidyl-carrier protein] + L-serine + ATP = L-seryl-[peptidyl-carrier protein] + AMP + diphosphate. It participates in siderophore biosynthesis; enterobactin biosynthesis. In terms of biological role, involved in the biosynthesis of the siderophore enterobactin (enterochelin), which is a macrocyclic trimeric lactone of N-(2,3-dihydroxybenzoyl)-serine. EntF catalyzes the activation of L-serine via ATP-dependent PPi exchange reaction to form seryladenylate. Activated L-serine is loaded onto the peptidyl carrier domain via a thioester linkage to the phosphopanthetheine moiety, forming seryl-S-Ppant-EntF. EntF acts then as the sole catalyst for the formation of the three amide and three ester linkages found in enterobactin, using seryladenylate and 2,3-dihydroxybenzoate-S-Ppant-EntB (DHB-S-Ppant-EntB) as substrates, via the formation of a DHB-Ser-S-Ppant-EntF intermediate. This Escherichia coli O157:H7 protein is Enterobactin synthase component F (entF).